The sequence spans 1156 residues: Pesticidal crystal protein Cry9Aa (1156 aa).

A propeptide spans 1-23 (MNQNKHGIIGASNCGCASDDVAK) (removed in mature form).

Belongs to the delta endotoxin family.

In terms of biological role, promotes colloidosmotic lysis by binding to the midgut epithelial cells of insects. This protein is toxic to Galleria mellonella. The chain is Pesticidal crystal protein Cry9Aa (cry9Aa) from Bacillus thuringiensis subsp. galleriae.